A 142-amino-acid polypeptide reads, in one-letter code: Large ribosomal subunit protein uL11 (142 aa).

The tract at residues 86–105 (LKSGSKEPGKQSAGQISRAK) is disordered.

The protein belongs to the universal ribosomal protein uL11 family. As to quaternary structure, part of the ribosomal stalk of the 50S ribosomal subunit. Interacts with L10 and the large rRNA to form the base of the stalk. L10 forms an elongated spine to which L12 dimers bind in a sequential fashion forming a multimeric L10(L12)X complex. Post-translationally, one or more lysine residues are methylated.

Forms part of the ribosomal stalk which helps the ribosome interact with GTP-bound translation factors. In Chelativorans sp. (strain BNC1), this protein is Large ribosomal subunit protein uL11.